Reading from the N-terminus, the 311-residue chain is Protoheme IX farnesyltransferase (311 aa).

9 helical membrane-spanning segments follow: residues 32 to 52 (VMSLVVFTALVGLMVSPVPIN), 53 to 73 (PWYGFLAIICIAVGGGGAGAL), 104 to 124 (FIFGMVLSLLSVLVMGSFINW), 125 to 145 (FAAFFLAFTIFFYVVIYTIWL), 153 to 173 (IVIGGASGAFPPMIGWAVTTG), 180 to 200 (FLLFLIIFMWTPPHFWALSLF), 224 to 244 (KQILFYTVLMVLCATAPCFTG), 245 to 265 (LGGVFYGIFSTILGIIFIYFA), and 285 to 305 (FFFSLLYLAAVFGALLIESLV).

This sequence belongs to the UbiA prenyltransferase family. Protoheme IX farnesyltransferase subfamily.

Its subcellular location is the cell inner membrane. It catalyses the reaction heme b + (2E,6E)-farnesyl diphosphate + H2O = Fe(II)-heme o + diphosphate. It participates in porphyrin-containing compound metabolism; heme O biosynthesis; heme O from protoheme: step 1/1. Converts heme B (protoheme IX) to heme O by substitution of the vinyl group on carbon 2 of heme B porphyrin ring with a hydroxyethyl farnesyl side group. This chain is Protoheme IX farnesyltransferase, found in Bartonella tribocorum (strain CIP 105476 / IBS 506).